Consider the following 179-residue polypeptide: Large ribosomal subunit protein uL6 (179 aa).

The protein belongs to the universal ribosomal protein uL6 family. In terms of assembly, part of the 50S ribosomal subunit.

Its function is as follows. This protein binds to the 23S rRNA, and is important in its secondary structure. It is located near the subunit interface in the base of the L7/L12 stalk, and near the tRNA binding site of the peptidyltransferase center. The sequence is that of Large ribosomal subunit protein uL6 from Geobacter metallireducens (strain ATCC 53774 / DSM 7210 / GS-15).